Reading from the N-terminus, the 340-residue chain is Manganese-dependent ADP-ribose/CDP-alcohol diphosphatase (340 aa).

Position 1 is an N-acetylmethionine (methionine 1). The Zn(2+) site is built by aspartate 25, glutamine 27, aspartate 74, asparagine 110, histidine 241, histidine 278, and histidine 280.

Belongs to the ADPRibase-Mn family. In terms of assembly, monomer. It depends on Mg(2+) as a cofactor.

It catalyses the reaction CDP-choline + H2O = phosphocholine + CMP + 2 H(+). It carries out the reaction ADP-D-ribose + H2O = D-ribose 5-phosphate + AMP + 2 H(+). The catalysed reaction is CDP-glycerol + H2O = sn-glycerol 3-phosphate + CMP + 2 H(+). In terms of biological role, hydrolyzes ADP-ribose, IDP-ribose, CDP-glycerol, CDP-choline and CDP-ethanolamine, but not other non-reducing ADP-sugars or CDP-glucose. May be involved in immune cell signaling as suggested by the second-messenger role of ADP-ribose, which activates TRPM2 as a mediator of oxidative/nitrosative stress. The protein is Manganese-dependent ADP-ribose/CDP-alcohol diphosphatase (Adprm) of Mus musculus (Mouse).